Reading from the N-terminus, the 292-residue chain is Homoserine kinase (292 aa).

ATP is bound at residue 84 to 94; it reads PLARGMGSSSA.

It belongs to the GHMP kinase family. Homoserine kinase subfamily.

The protein resides in the cytoplasm. It catalyses the reaction L-homoserine + ATP = O-phospho-L-homoserine + ADP + H(+). Its pathway is amino-acid biosynthesis; L-threonine biosynthesis; L-threonine from L-aspartate: step 4/5. In terms of biological role, catalyzes the ATP-dependent phosphorylation of L-homoserine to L-homoserine phosphate. This Campylobacter lari (strain RM2100 / D67 / ATCC BAA-1060) protein is Homoserine kinase.